Consider the following 500-residue polypeptide: E3 ubiquitin-protein ligase TRIM69 (500 aa).

The interval 1–22 (MEVSSRPPSNFDPGNYVEMSDP) is disordered. The segment at 1–153 (MEVSSRPPSN…SMGQSKDFLQ (153 aa)) is necessary for nuclear localization. An RING-type zinc finger spans residues 42-83 (CPLCNDWFRDPLMLTCGHNFCQDCIQSFWKVHSKETFCPDCK). Positions 217 to 256 (NKEKDILNDLRDEGKLLNEEMEVNLNQIQEQCLVAKDMLA) form a coiled coil. The 195-residue stretch at 306 to 500 (PIQYIIWKEM…KEPLHIVHPQ (195 aa)) folds into the B30.2/SPRY domain. Serine 342 carries the post-translational modification Phosphoserine.

The protein belongs to the TRIM/RBCC family. Homo-multimer; required for antiviral activity. Interacts with PML. In terms of processing, phosphorylated. Phosphorylation is necessary for nuclear localization. In terms of tissue distribution, expressed in spermatid.

Its subcellular location is the cytoplasm. The protein resides in the nucleus. The protein localises to the nucleus speckle. It is found in the cytoskeleton. It localises to the microtubule organizing center. Its subcellular location is the centrosome. The catalysed reaction is S-ubiquitinyl-[E2 ubiquitin-conjugating enzyme]-L-cysteine + [acceptor protein]-L-lysine = [E2 ubiquitin-conjugating enzyme]-L-cysteine + N(6)-ubiquitinyl-[acceptor protein]-L-lysine.. Its pathway is protein modification; protein ubiquitination. Functionally, E3 ubiquitin ligase that plays an important role in antiviral immunity by restricting different viral infections including dengue virus or vesicular stomatitis indiana virus. Ubiquitinates viral proteins such as dengue virus NS3 thereby limiting infection. In addition, acts as a key mediator of type I interferon induced microtubule stabilization by directly associating to microtubules independently of its E3 ligase activity. Also plays a role in cataract formation together with TP53. Mechanistically, inhibits UVB-induced cell apoptosis and reactive oxygen species (ROS) production by inducing TP53 ubiquitination. Regulates centrosome dynamics and mitotic progression by ubiquitinating STK3/MST2; leading to its redistribution to the perinuclear cytoskeleton and subsequent phosphorylation by PLK1. This is E3 ubiquitin-protein ligase TRIM69 (Trim69) from Mus musculus (Mouse).